The sequence spans 452 residues: Phosphoglucosamine mutase (452 aa).

Residue Ser98 is the Phosphoserine intermediate of the active site. Residues Ser98, Asp239, Asp241, and Asp243 each coordinate Mg(2+). Ser98 is modified (phosphoserine).

This sequence belongs to the phosphohexose mutase family. The cofactor is Mg(2+). Post-translationally, activated by phosphorylation.

The catalysed reaction is alpha-D-glucosamine 1-phosphate = D-glucosamine 6-phosphate. Functionally, catalyzes the conversion of glucosamine-6-phosphate to glucosamine-1-phosphate. This chain is Phosphoglucosamine mutase, found in Anaplasma marginale (strain Florida).